A 783-amino-acid chain; its full sequence is Heat shock transcription factor (783 aa).

The tract at residues 1 to 59 is disordered; it reads MTTNLYAIAGPSKPTTPTSTPSPRSEPPSPLKSLTSLPTNPLNSHGTSTPNTLTNQLSS. 2 stretches are compositionally biased toward low complexity: residues 11-23 and 31-42; these read PSKP…TPSP and LKSLTSLPTNPL. Polar residues predominate over residues 43–59; the sequence is NSHGTSTPNTLTNQLSS. The DNA-binding element occupies 78-168; that stretch reads MKVPAFLNKL…PIELWEFANP (91 aa). Residues 181–262 are disordered; that stretch reads VTRKNNRPSN…PGSVPPSHTS (82 aa). Composition is skewed to low complexity over residues 189–199 and 209–233; these read SNSGVGPSSSV and STRS…ISQG. Residues 238–262 show a composition bias toward polar residues; that stretch reads NHSTSGKYLITDGTTPGSVPPSHTS. Residues 280–333 are involved in trimerization; the sequence is GIAAIRQTQASIATDLRKLQASNEALWRQAYETQEKQRKHEETIDLIVSFLERL. 2 stretches are compositionally biased toward basic and acidic residues: residues 350-372 and 399-415; these read RGVG…SRFA and TGEH…DRLV. Disordered stretches follow at residues 350–554, 599–652, and 736–783; these read RGVG…LLSP, QALA…TLAL, and QGLA…KSES. The segment covering 418–448 has biased composition (polar residues); that stretch reads GSNSEYSIPSVKRTSSSSHPISLGQLGSSRF. Low complexity-rich tracts occupy residues 452-467, 497-511, 522-550, and 616-632; these read PSED…GSTS, LSPL…PSSS, PFPS…PSQP, and NPNG…AHGM. Positions 742–752 are enriched in acidic residues; it reads GEEEGEREVEG. The segment covering 753 to 765 has biased composition (gly residues); that stretch reads DGGVSSSGAGAGA.

Belongs to the HSF family. In terms of assembly, homotrimer. Homotrimerization increases the affinity of HSF1 to DNA. Interacts with transcriptional coregulator SSA1 on chromatin.

Its subcellular location is the nucleus. In terms of biological role, DNA-binding transcription factor that specifically binds heat shock promoter elements (HSE) and activates transcription. Together with its coregulator SSA1, activates expression of laccase LAC1 during glucose starvation. In Cryptococcus neoformans var. neoformans serotype D (strain JEC21 / ATCC MYA-565) (Filobasidiella neoformans), this protein is Heat shock transcription factor.